We begin with the raw amino-acid sequence, 193 residues long: UPF0314 protein Pden_1914 (193 aa).

Helical transmembrane passes span 13–33 (APYW…LWIG), 62–82 (WYTP…WLVA), 148–168 (LPVW…TWLI), and 172–192 (LALN…WQAA).

It belongs to the UPF0314 family.

It is found in the cell membrane. The sequence is that of UPF0314 protein Pden_1914 from Paracoccus denitrificans (strain Pd 1222).